The chain runs to 412 residues: Tyrosine--tRNA ligase (412 aa).

A 'HIGH' region motif is present at residues 48-57 (PSRPDLHLGH). The 'KMSKS' region motif lies at 232 to 236 (KMSKS). Lys235 contacts ATP. The 64-residue stretch at 342–405 (VGLLNLMRHA…GKRRFARIRP (64 aa)) folds into the S4 RNA-binding domain.

It belongs to the class-I aminoacyl-tRNA synthetase family. TyrS type 2 subfamily. As to quaternary structure, homodimer.

Its subcellular location is the cytoplasm. The catalysed reaction is tRNA(Tyr) + L-tyrosine + ATP = L-tyrosyl-tRNA(Tyr) + AMP + diphosphate + H(+). Its function is as follows. Catalyzes the attachment of tyrosine to tRNA(Tyr) in a two-step reaction: tyrosine is first activated by ATP to form Tyr-AMP and then transferred to the acceptor end of tRNA(Tyr). The polypeptide is Tyrosine--tRNA ligase (Salinibacter ruber (strain DSM 13855 / M31)).